The sequence spans 1196 residues: MATWNASQIILNSMSNIIESPQSKPRPVMASNGASLFIPVTMEVPCDQGTRMWWAFLASSMVTFFGGLFIILVWRTFKYLWTVCCHCGGKNKEAQKVVNVASSQVTDGDYKPTDDKEEVGVAEVGWMTSVKDWAGVMISAQTLTGRVLVVTVFALSIGALMIYFIDSSNPIESCQNFYKDFTLQIDMAFNIFFLLYFGLRFIAANDKLWFWLEVNSVVDFFTVPPVFVSVYLNRSWLGLRFLRALRLIQFSEILQFLNILKTSNSIKLVNLCSIFISTWLTAAGFIHLVENSGDPWRNFENSQDLSYWECMYLLMVTMSTVGYGDVYAKTTLGRLFMVFFILGGLAMFASYVPEIIELIGNRKKYGGSYSAVSGRKHIVVCGHITLESVSNFLKDFLHKDRDDVNVEIVFLHNISPNLELEALFKKHFTQVEFYQGSVLNPHDLARVKIESADACLILANKYCADPDAEDASNIMRVISIKNYHPKIRIITQMLQYHNKAHLLNIPSWNWKDGDDAICLAELKLGFIAQSCLAQGLSTMLANLFSMRSFIKIEEDTWQKYYLEGVANEMYTEYLSSAFVGLSFPAVCELCFVKLKLLMIAIEYKSEKGESRILINPGNHMKIKEGTLGFFIASDAKEVKRAFFYCKACHDDITDPKRIKKCACKRLEDEQPSALSPKKKQRNGGMRHSPNTSPNMMRHDPLLMTGNDQIDNMDSSSVKRYDSTGMFHWCPAKELDKVLLTRSEAAMTVLSGHVVVCIFGDMTSALIGVRNLVMPLRASNFHYHELKHIVFVGSLDYIKREWETLHNFPKVSILPGTPLSRADLRAVNINLCDMCVILSANQNNIDDTSLQDKECILASLNIKSMQFDDSIGLLQANSQGFTPPGMERSSPDNSPLHGVARQASITTGANIPIITELVNDSNVQFLDQDDDDDPDTELYLTQPFACGTAFAVSVLDSLMSATYFNDNILTLIRTLVTGGATPELEALVAEENALRGGYSTPQTLANRDRCRVAQLALYDGPFADLGDGGCYGDLYCKALKTYNMLCFGIYRLRDAHISTPSQCTKRYVITNPPYEFELVPTDLIFCLMQFDHNASQSRASLSHSSHSSHSSSKKSSSVTSILHTASANRQNRVKARDSRDKQKMGQAEKKWYTDETENNYPRNIQIKPMSTHMANQINQYKSTSSLIPPIREVEDEC.

Residues 1–52 (MATWNASQIILNSMSNIIESPQSKPRPVMASNGASLFIPVTMEVPCDQGTRM) are Extracellular-facing. A helical transmembrane segment spans residues 53–73 (WWAFLASSMVTFFGGLFIILV). Topologically, residues 74 to 146 (WRTFKYLWTV…MISAQTLTGR (73 aa)) are cytoplasmic. A helical transmembrane segment spans residues 147–167 (VLVVTVFALSIGALMIYFIDS). Residues 168 to 182 (SNPIESCQNFYKDFT) lie on the Extracellular side of the membrane. A helical membrane pass occupies residues 183–203 (LQIDMAFNIFFLLYFGLRFIA). The Cytoplasmic segment spans residues 204–207 (ANDK). Residues 208–228 (LWFWLEVNSVVDFFTVPPVFV) traverse the membrane as a helical segment. Residues 229–232 (SVYL) lie on the Extracellular side of the membrane. Residues 233–253 (NRSWLGLRFLRALRLIQFSEI) traverse the membrane as a helical; Voltage-sensor segment. Residues 254-268 (LQFLNILKTSNSIKL) lie on the Cytoplasmic side of the membrane. The helical transmembrane segment at 269–289 (VNLCSIFISTWLTAAGFIHLV) threads the bilayer. The Extracellular segment spans residues 290-303 (ENSGDPWRNFENSQ). Positions 304-326 (DLSYWECMYLLMVTMSTVGYGDV) form an intramembrane region, pore-forming. Positions 320–323 (TVGY) match the Selectivity for potassium motif. Over 327-335 (YAKTTLGRL) the chain is Extracellular. A helical transmembrane segment spans residues 336–356 (FMVFFILGGLAMFASYVPEII). At 357-1196 (ELIGNRKKYG…PPIREVEDEC (840 aa)) the chain is on the cytoplasmic side. The RCK N-terminal 1 domain maps to 375–517 (RKHIVVCGHI…WNWKDGDDAI (143 aa)). Residues glutamate 407, glutamine 430, and glutamate 432 each contribute to the Mg(2+) site. The tract at residues 524-544 (LGFIAQSCLAQGLSTMLANLF) is segment S7. Residues 581 to 601 (LSFPAVCELCFVKLKLLMIAI) are segment S8. Residues 645 to 649 (CKACH) form a heme-binding motif region. Residues 672–697 (SALSPKKKQRNGGMRHSPNTSPNMMR) are disordered. Residues 748-768 (VLSGHVVVCIFGDMTSALIGV) are segment S9. The 145-residue stretch at 750–894 (SGHVVVCIFG…MERSSPDNSP (145 aa)) folds into the RCK N-terminal 2 domain. Residues 914–936 (TELVNDSNVQFLDQDDDDDPDTE) carry the Calcium bowl motif. Ca(2+) is bound by residues glutamine 923, aspartate 926, aspartate 929, and aspartate 931. The tract at residues 943–963 (FACGTAFAVSVLDSLMSATYF) is segment S10. Residues 1098-1119 (ASLSHSSHSSHSSSKKSSSVTS) are compositionally biased toward low complexity. The tract at residues 1098–1149 (ASLSHSSHSSHSSSKKSSSVTSILHTASANRQNRVKARDSRDKQKMGQAEKK) is disordered. The segment covering 1120–1129 (ILHTASANRQ) has biased composition (polar residues). The segment covering 1133-1149 (KARDSRDKQKMGQAEKK) has biased composition (basic and acidic residues).

It belongs to the potassium channel family. Calcium-activated (TC 1.A.1.3) subfamily. KCa1.1/KCNMA1 sub-subfamily. Homotetramer; which constitutes the calcium-activated potassium channel. Expressed in both the somites and neural tube of 1 day embryos. Within the nervous system, it is restricted to dorsal parts, and expressed centrally in regions dedicated to processing of sensory information. Six hours later, it is expressed segmentally within the somites. At this time, it is expressed in a primary sensory organ, the trigeminal ganglion. By 2 days, it is also expressed in other primary sensory organs, such as the otic vesicle, and the eye. Within the retina, it is expressed to an internal layer. In the developing otic vesicle, it is abundantly expressed near the apical surface. Isoform 3 is neural-specific, and is only expressed during late stages of neuronal differentiation.

The protein localises to the cell membrane. It carries out the reaction K(+)(in) = K(+)(out). Ethanol and carbon monoxide-bound heme increase channel activation. Heme inhibits channel activation. Its function is as follows. Potassium channel activated by both membrane depolarization or increase in cytosolic Ca(2+) that mediates export of K(+). It is also activated by the concentration of cytosolic Mg(2+). Its activation dampens the excitatory events that elevate the cytosolic Ca(2+) concentration and/or depolarize the cell membrane. It therefore contributes to repolarization of the membrane potential. Plays a key role in controlling excitability in a number of systems, such as regulation of the contraction of smooth muscle, the tuning of hair cells in the cochlea, regulation of transmitter release, and innate immunity. In smooth muscles, its activation by high level of Ca(2+), caused by ryanodine receptors in the sarcoplasmic reticulum, regulates the membrane potential. In cochlea cells, its number and kinetic properties partly determine the characteristic frequency of each hair cell and thereby helps to establish a tonotopic map. Highly sensitive to both iberiotoxin (IbTx) and charybdotoxin (CTX). This Xenopus laevis (African clawed frog) protein is Calcium-activated potassium channel subunit alpha-1 (kcnma1).